Reading from the N-terminus, the 448-residue chain is tRNA wybutosine-synthesizing protein 2 homolog (448 aa).

S-adenosyl-L-methionine is bound by residues Ser-218, Lys-225, Glu-265, and 293–294; that span reads DN.

It belongs to the class I-like SAM-binding methyltransferase superfamily. TRM5/TYW2 family.

It carries out the reaction 4-demethylwyosine(37) in tRNA(Phe) + S-adenosyl-L-methionine = 4-demethyl-7-[(3S)-3-amino-3-carboxypropyl]wyosine(37) in tRNA(Phe) + S-methyl-5'-thioadenosine + H(+). The protein operates within tRNA modification; wybutosine-tRNA(Phe) biosynthesis. S-adenosyl-L-methionine-dependent transferase that acts as a component of the wybutosine biosynthesis pathway. Wybutosine is a hyper modified guanosine with a tricyclic base found at the 3'-position adjacent to the anticodon of eukaryotic phenylalanine tRNA. Catalyzes the transfer of the alpha-amino-alpha-carboxypropyl (acp) group from S-adenosyl-L-methionine to the C-7 position of 4-demethylwyosine (imG-14) to produce wybutosine-86. In Homo sapiens (Human), this protein is tRNA wybutosine-synthesizing protein 2 homolog (TRMT12).